The chain runs to 412 residues: Nuclear hormone receptor family member nhr-61 (412 aa).

Over residues 1-19 (MIVDSISSSTASTSSSSPT) the composition is skewed to low complexity. A disordered region spans residues 1–23 (MIVDSISSSTASTSSSSPTRGTP). The nuclear receptor DNA-binding region spans 27-102 (SLQCAVCGDV…VGMNPRAVQG (76 aa)). 2 NR C4-type zinc fingers span residues 30-50 (CAVC…CNGC) and 66-90 (CRHG…LTRC). Residues 144–407 (KKEQIIDNLR…DWSQELRDHR (264 aa)) enclose the NR LBD domain.

The protein belongs to the nuclear hormone receptor family.

It localises to the nucleus. Its function is as follows. Orphan nuclear receptor. In Caenorhabditis elegans, this protein is Nuclear hormone receptor family member nhr-61 (nhr-61).